The sequence spans 247 residues: 3,4-dihydroxy-2-butanone 4-phosphate synthase (247 aa).

Residues 38–39 (RE), Asp43, 179–183 (RMGQT), and Glu203 each bind D-ribulose 5-phosphate. Glu39 provides a ligand contact to Mg(2+).

It belongs to the DHBP synthase family. In terms of assembly, homodimer. Mg(2+) serves as cofactor. The cofactor is Mn(2+).

The enzyme catalyses D-ribulose 5-phosphate = (2S)-2-hydroxy-3-oxobutyl phosphate + formate + H(+). It functions in the pathway cofactor biosynthesis; riboflavin biosynthesis; 2-hydroxy-3-oxobutyl phosphate from D-ribulose 5-phosphate: step 1/1. Its function is as follows. Catalyzes the conversion of D-ribulose 5-phosphate to formate and 3,4-dihydroxy-2-butanone 4-phosphate. In Methanosarcina acetivorans (strain ATCC 35395 / DSM 2834 / JCM 12185 / C2A), this protein is 3,4-dihydroxy-2-butanone 4-phosphate synthase.